The following is a 69-amino-acid chain: Mitotic-spindle organizing protein 1 (69 aa).

This sequence belongs to the MOZART1 family. In terms of assembly, part of the gamma-tubulin complex.

Its subcellular location is the cytoplasm. The protein resides in the cytoskeleton. The protein localises to the microtubule organizing center. It is found in the spindle. Functionally, required for gamma-tubulin complex recruitment to the microtubule organizing centers (MTOCs). The polypeptide is Mitotic-spindle organizing protein 1 (Picea sitchensis (Sitka spruce)).